Consider the following 158-residue polypeptide: Transcription elongation factor GreA (158 aa).

The protein belongs to the GreA/GreB family.

In terms of biological role, necessary for efficient RNA polymerase transcription elongation past template-encoded arresting sites. The arresting sites in DNA have the property of trapping a certain fraction of elongating RNA polymerases that pass through, resulting in locked ternary complexes. Cleavage of the nascent transcript by cleavage factors such as GreA or GreB allows the resumption of elongation from the new 3'terminus. GreA releases sequences of 2 to 3 nucleotides. This is Transcription elongation factor GreA from Bacillus licheniformis (strain ATCC 14580 / DSM 13 / JCM 2505 / CCUG 7422 / NBRC 12200 / NCIMB 9375 / NCTC 10341 / NRRL NRS-1264 / Gibson 46).